The sequence spans 457 residues: UDP-N-acetylmuramate--L-alanine ligase (457 aa).

112-118 provides a ligand contact to ATP; it reads GAHGKTS.

This sequence belongs to the MurCDEF family.

The protein localises to the cytoplasm. The catalysed reaction is UDP-N-acetyl-alpha-D-muramate + L-alanine + ATP = UDP-N-acetyl-alpha-D-muramoyl-L-alanine + ADP + phosphate + H(+). It functions in the pathway cell wall biogenesis; peptidoglycan biosynthesis. Cell wall formation. The chain is UDP-N-acetylmuramate--L-alanine ligase from Desulfosudis oleivorans (strain DSM 6200 / JCM 39069 / Hxd3) (Desulfococcus oleovorans).